Reading from the N-terminus, the 304-residue chain is Recombination-associated protein RdgC (304 aa).

Belongs to the RdgC family.

The protein resides in the cytoplasm. Its subcellular location is the nucleoid. Its function is as follows. May be involved in recombination. This Paraburkholderia phymatum (strain DSM 17167 / CIP 108236 / LMG 21445 / STM815) (Burkholderia phymatum) protein is Recombination-associated protein RdgC.